Reading from the N-terminus, the 530-residue chain is MTRDFKPGDLIFAKMKGYPHWPARVDEVPDGAVKPPTNKLPIFFFGTHETAFLGPKDIFPYSENKEKYGKPNKRKGFNEGLWEIDNNPKVKFSSQQASTKQSNASSDVEVEEKETSVSKEDTDHEEKASNEDVTKAIDITTPKAARRGRKRKAEKQVETEEAGVVTTAAASVNLKVSPKRGRPAATEVKIPKPRGRPKMVKQPCPSESDMVTEEDKSKKKGQEEKQPKKQLKKDEEGQKEEDKPRKEPDKKEGKKEVESKRKNSAKTGVTSTSDSEEEGDDQESEKKRKGGRNFQTAHRRNMLKGQHEKEAADRKRKQEEQMETEQQNKDEGKKPEVKKVEKKRETSMDSRLQRIHAEIKNSLKIDNLDVNRCIEALDELASLQVTMQQAQKHTEMITTLKKIRRFKVSQIIMEKSTMLYNKFKNMFLVGEGDSVITQVLNKSLAEQRQHEEANKTKDQGKKGPNKKLDKEQTGSKTLNGGSDAPDSNQAQHNGDSSEESKDKHEASSKKKPSNEERETEISLKDSTLDN.

The PWWP domain occupies 1-64; that stretch reads MTRDFKPGDL…PKDIFPYSEN (64 aa). Lys-75 is covalently cross-linked (Glycyl lysine isopeptide (Lys-Gly) (interchain with G-Cter in SUMO2)). Residues 86 to 349 form a disordered region; sequence NNPKVKFSSQ…VEKKRETSMD (264 aa). The span at 92-104 shows a compositional bias: polar residues; that stretch reads FSSQQASTKQSNA. Ser-102, Ser-105, and Ser-106 each carry phosphoserine. The span at 113-135 shows a compositional bias: basic and acidic residues; that stretch reads KETSVSKEDTDHEEKASNEDVTK. Residues Thr-115 and Thr-122 each carry the phosphothreonine modification. Ser-129 is modified (phosphoserine). Phosphothreonine is present on Thr-141. Basic residues predominate over residues 144–153; sequence AARRGRKRKA. Residues 146-156 carry the Nuclear localization signal motif; sequence RRGRKRKAEKQ. At Thr-167 the chain carries Phosphothreonine. A phosphoserine mark is found at Ser-177 and Ser-206. Over residues 213–261 the composition is skewed to basic and acidic residues; it reads EEDKSKKKGQEEKQPKKQLKKDEEGQKEEDKPRKEPDKKEGKKEVESKR. A Phosphoserine modification is found at Ser-271. Thr-272 is subject to Phosphothreonine. Phosphoserine occurs at positions 273 and 275. Residues 274–283 are compositionally biased toward acidic residues; the sequence is DSEEEGDDQE. Basic residues predominate over residues 287–302; that stretch reads KRKGGRNFQTAHRRNM. Basic and acidic residues predominate over residues 305–349; it reads GQHEKEAADRKRKQEEQMETEQQNKDEGKKPEVKKVEKKRETSMD. Coiled-coil stretches lie at residues 306-334 and 371-395; these read QHEK…EGKK and NRCI…KHTE. The tract at residues 340-417 is integrase-binding domain (IBD); sequence VEKKRETSMD…VSQIIMEKST (78 aa). Residue Ser-434 is modified to Phosphoserine. Phosphothreonine is present on Thr-437. Ser-443 is subject to Phosphoserine. Positions 446–473 are enriched in basic and acidic residues; that stretch reads EQRQHEEANKTKDQGKKGPNKKLDKEQT. The interval 446-530 is disordered; it reads EQRQHEEANK…ISLKDSTLDN (85 aa). Residues 474 to 494 are compositionally biased toward polar residues; the sequence is GSKTLNGGSDAPDSNQAQHNG. A compositionally biased stretch (basic and acidic residues) spans 498–530; sequence EESKDKHEASSKKKPSNEERETEISLKDSTLDN. A Citrulline modification is found at Arg-517. Ser-522 bears the Phosphoserine mark. Phosphothreonine is present on Thr-527.

It belongs to the HDGF family. As to quaternary structure, monomer. Interacts with IFRD1/PC4. Interacts (via IBD domain) with POGZ (via IBM motif) and CDCA7L (via IBM motifs). Interacts (via IBD domain) with KMT2A (via IBM motifs) with a moderate affinity whereas interacts with the KMT2A-MEN1 complex with a greater affinity; MEN1 enhances interaction of KMT2A with PSIP1. Interacts (via IBD domain) with IWS1 (via IBM motif), MED1 (via IBM motif) and DBF4 (via IBM motifs). In terms of assembly, (Microbial infection) Interacts (via IBD domain) with feline immunodeficiency virus (FIV) integrase (IN), determining its nuclear localization, its tight association with chromatin and its protection from the proteasome. In terms of processing, citrullinated by PADI4.

Its subcellular location is the nucleus. Functionally, transcriptional coactivator involved in neuroepithelial stem cell differentiation and neurogenesis. Involved in particular in lens epithelial cell gene regulation and stress responses. May play an important role in lens epithelial to fiber cell terminal differentiation. May play a protective role during stress-induced apoptosis. This chain is PC4 and SFRS1-interacting protein (PSIP1), found in Felis catus (Cat).